A 641-amino-acid polypeptide reads, in one-letter code: Putative ABC transporter ATP-binding protein MA_0870 (641 aa).

The ABC transporter 1 domain maps to 10–250 (IEIKDLWYTY…IEVFHRLGLR (241 aa)). 44 to 51 (GPTGCGKS) is an ATP binding site. Residues 286 to 332 (VKTPRNFSNPEEETGRRTDPAERNEFVNTGSGNIKYGDNRSENKGSE) are disordered. Basic and acidic residues-rich tracts occupy residues 298 to 310 (ETGRRTDPAERNE) and 322 to 332 (GDNRSENKGSE). The 229-residue stretch at 338–566 (ISIRDLWSGY…IEILKQASLT (229 aa)) folds into the ABC transporter 2 domain. Residue 371–378 (GTNGSGKS) participates in ATP binding.

This sequence belongs to the ABC transporter superfamily.

It localises to the cell membrane. Its function is as follows. Probably part of an ABC transporter complex. Responsible for energy coupling to the transport system. The chain is Putative ABC transporter ATP-binding protein MA_0870 from Methanosarcina acetivorans (strain ATCC 35395 / DSM 2834 / JCM 12185 / C2A).